The following is a 296-amino-acid chain: Lipoyl synthase (296 aa).

[4Fe-4S] cluster-binding residues include C37, C42, C48, C63, C67, C70, and S276. The Radical SAM core domain maps to 49–265 (WSKKHTTVMI…ERVAKTKGFL (217 aa)).

It belongs to the radical SAM superfamily. Lipoyl synthase family. The cofactor is [4Fe-4S] cluster.

Its subcellular location is the cytoplasm. It carries out the reaction [[Fe-S] cluster scaffold protein carrying a second [4Fe-4S](2+) cluster] + N(6)-octanoyl-L-lysyl-[protein] + 2 oxidized [2Fe-2S]-[ferredoxin] + 2 S-adenosyl-L-methionine + 4 H(+) = [[Fe-S] cluster scaffold protein] + N(6)-[(R)-dihydrolipoyl]-L-lysyl-[protein] + 4 Fe(3+) + 2 hydrogen sulfide + 2 5'-deoxyadenosine + 2 L-methionine + 2 reduced [2Fe-2S]-[ferredoxin]. The protein operates within protein modification; protein lipoylation via endogenous pathway; protein N(6)-(lipoyl)lysine from octanoyl-[acyl-carrier-protein]: step 2/2. Functionally, catalyzes the radical-mediated insertion of two sulfur atoms into the C-6 and C-8 positions of the octanoyl moiety bound to the lipoyl domains of lipoate-dependent enzymes, thereby converting the octanoylated domains into lipoylated derivatives. This Rickettsia conorii (strain ATCC VR-613 / Malish 7) protein is Lipoyl synthase.